The primary structure comprises 362 residues: MASGSAGKPTGEAASPAPGSAVGGASSQPRKRLVSICDHCKGKMQLVADLLLLSSEARPVLFEGPASPGAGAESFEQCRDTIIARTKGLSILTHDVQSQLNMGRFGEAGDSLVELGDLVVSLTECSAHAAYLAAVATPGAQPAQPGLVDRYRVTRCRHEVEQGCAVLRATPLADMTPQLLLEVSQGLSRNLKFLTDACALASDKSRDRFSREQFKLGVKCMSTSASALLACVREVKAAPSELARSRCALFSGPLVQAVSALVGFATEPQFLGRAAAVSTEGKAVQTAILGGAMSVVSACVLLTQCLRDLAQHPDGSAKMSDHRERLRNSACAVSEGCTLLSQALRERSSPRTLPPVNSNSVN.

A disordered region spans residues 1 to 27; the sequence is MASGSAGKPTGEAASPAPGSAVGGASS. N-acetylalanine is present on A2. The segment covering 9 to 27 has biased composition (low complexity); that stretch reads PTGEAASPAPGSAVGGASS.

In terms of assembly, may homodimerize. Interacts with F-actin. In terms of tissue distribution, ubiquitous.

Actin-binding protein which may have an oncogenic function and regulates cell proliferation, migration and invasion in cancer cells. In Mus musculus (Mouse), this protein is Talin rod domain-containing protein 1.